The following is a 94-amino-acid chain: Large ribosomal subunit protein bL25 (94 aa).

This sequence belongs to the bacterial ribosomal protein bL25 family. In terms of assembly, part of the 50S ribosomal subunit; part of the 5S rRNA/L5/L18/L25 subcomplex. Contacts the 5S rRNA. Binds to the 5S rRNA independently of L5 and L18.

This is one of the proteins that binds to the 5S RNA in the ribosome where it forms part of the central protuberance. The protein is Large ribosomal subunit protein bL25 of Serratia proteamaculans (strain 568).